Consider the following 379-residue polypeptide: MSATLALTEQLIARASVTPDDQHCQQLMIERLAALGFECETIASHGVTNFWAVKRGTAGRAGKLLAFAGHTDVVPTGPLEQWSSPPFVPTHRDGKLYGRGAADMKTSLAGFVVAAEEFVAAHPQHRGSIGFLITSDEEGPATDGTVKVVEALAARGERLDYCIVGEPTSTATLGDVVKNGRRGSMSGELVVKGVQGHIAYPHLAKNPIHLLAPALAELAAEQWDEGNEYFPPTTWQVSNLRAGTGATNVIPGHADLLFNFRFSTASTVEGLQARVHAILDRHGLDYTLNWSVSGLPFLTPRGELSNALDAAIRAETGVSPELSTTGGTSDGRFIARICPQVIEFGPPNASIHKIDEHIDVRFVDPLKNVYRRVLEQLIA.

His-70 contacts Zn(2+). Asp-72 is a catalytic residue. Asp-103 is a Zn(2+) binding site. Glu-137 acts as the Proton acceptor in catalysis. Zn(2+) is bound by residues Glu-138, Glu-166, and His-352.

This sequence belongs to the peptidase M20A family. DapE subfamily. Homodimer. The cofactor is Zn(2+). Co(2+) is required as a cofactor.

It carries out the reaction N-succinyl-(2S,6S)-2,6-diaminopimelate + H2O = (2S,6S)-2,6-diaminopimelate + succinate. Its pathway is amino-acid biosynthesis; L-lysine biosynthesis via DAP pathway; LL-2,6-diaminopimelate from (S)-tetrahydrodipicolinate (succinylase route): step 3/3. In terms of biological role, catalyzes the hydrolysis of N-succinyl-L,L-diaminopimelic acid (SDAP), forming succinate and LL-2,6-diaminopimelate (DAP), an intermediate involved in the bacterial biosynthesis of lysine and meso-diaminopimelic acid, an essential component of bacterial cell walls. The sequence is that of Succinyl-diaminopimelate desuccinylase from Burkholderia pseudomallei (strain 1106a).